The primary structure comprises 614 residues: DNA mismatch repair protein MutL (614 aa).

It belongs to the DNA mismatch repair MutL/HexB family.

Its function is as follows. This protein is involved in the repair of mismatches in DNA. It is required for dam-dependent methyl-directed DNA mismatch repair. May act as a 'molecular matchmaker', a protein that promotes the formation of a stable complex between two or more DNA-binding proteins in an ATP-dependent manner without itself being part of a final effector complex. In Leptospira biflexa serovar Patoc (strain Patoc 1 / ATCC 23582 / Paris), this protein is DNA mismatch repair protein MutL.